Here is a 123-residue protein sequence, read N- to C-terminus: Major pollen allergen Ole e 10 (123 aa).

An N-terminal signal peptide occupies residues 1–21 (MRGTAGVPDQPVPTPTPSVPT). The tract at residues 1-37 (MRGTAGVPDQPVPTPTPSVPTSSSPVPKPPTQGNKKW) is disordered. Cysteines 38 and 101 form a disulfide.

Post-translationally, the N-terminus is blocked. In terms of processing, phosphorylated at Ser-24 when expressed as a recombinant protein in a heterologous system. Not glycosylated. Post-translationally, contains two additional disulfide bonds. Expressed in mature and germinating pollen.

Its subcellular location is the cytoplasmic vesicle. Functionally, carbohydrate-binding protein binding preferentially 1,3-beta-glucans. May be involved in pollen tube wall re-formation during germination. This is Major pollen allergen Ole e 10 from Olea europaea (Common olive).